We begin with the raw amino-acid sequence, 87 residues long: Putative regulatory protein GWCH70_1057 (87 aa).

This sequence belongs to the RemA family.

The polypeptide is Putative regulatory protein GWCH70_1057 (Geobacillus sp. (strain WCH70)).